A 917-amino-acid polypeptide reads, in one-letter code: DNA mismatch repair protein spellchecker 1 (917 aa).

667–674 (GPNMGGKS) contacts ATP.

This sequence belongs to the DNA mismatch repair MutS family. In terms of assembly, heterodimer of Msh2/Spel and Msh6.

It is found in the nucleus. Involved in postreplication mismatch repair. Binds specifically to DNA containing mismatched nucleotides thus providing a target for the excision repair processes characteristic of postreplication mismatch repair. The sequence is that of DNA mismatch repair protein spellchecker 1 (spel1) from Drosophila melanogaster (Fruit fly).